We begin with the raw amino-acid sequence, 173 residues long: RNA pyrophosphohydrolase (173 aa).

Positions 11-164 constitute a Nudix hydrolase domain; sequence PYRKCVGILV…KKHVYTQVVK (154 aa). A Nudix box motif is present at residues 52 to 73; sequence GGINQGEKPIDAARRELYEETG.

This sequence belongs to the Nudix hydrolase family. RppH subfamily. It depends on a divalent metal cation as a cofactor.

In terms of biological role, accelerates the degradation of transcripts by removing pyrophosphate from the 5'-end of triphosphorylated RNA, leading to a more labile monophosphorylated state that can stimulate subsequent ribonuclease cleavage. This chain is RNA pyrophosphohydrolase, found in Bartonella clarridgeiae.